The chain runs to 322 residues: MIFSTLEHILTHISFSVVSIVITIHLITLLADEFVELYDSSEKGMITTFFCITGLLVTRWIFLGHLPLSDLYESLIFLSWSFSIIHMVPYFKKHKNFLSAITAPSTFFTQGFATSGLLTDMHQSEILVPALQSQWLMMHVSMMILGYAALLCGSLFSVAFLVITFRKIIRIFDKSNNLLNNSFFFSEIQYMAERKNVLRNISFLSSRNYYRFQLIQQLDDWGYRIISIGFIFLTIGILSGAVWANEAWGSYWNWDPKETWAFITWTIFAIYFHIRTNKKLEGFHSAIVASIGFLLIWICYFGVNLLGIGLHSYGSFTLTISI.

8 helical membrane passes run 9-29 (ILTH…LITL), 44-64 (GMIT…IFLG), 71-91 (LYES…VPYF), 97-117 (FLSA…TSGL), 143-163 (MILG…FLVI), 225-245 (IISI…VWAN), 254-274 (WDPK…YFHI), and 286-306 (AIVA…VNLL).

Belongs to the CcmF/CycK/Ccl1/NrfE/CcsA family. As to quaternary structure, may interact with Ccs1.

It is found in the plastid. The protein localises to the chloroplast thylakoid membrane. Required during biogenesis of c-type cytochromes (cytochrome c6 and cytochrome f) at the step of heme attachment. This Manihot esculenta (Cassava) protein is Cytochrome c biogenesis protein CcsA.